The following is a 102-amino-acid chain: Small ribosomal subunit protein uS10 (102 aa).

Belongs to the universal ribosomal protein uS10 family. In terms of assembly, part of the 30S ribosomal subunit.

Involved in the binding of tRNA to the ribosomes. This chain is Small ribosomal subunit protein uS10, found in Sulfurihydrogenibium sp. (strain YO3AOP1).